The sequence spans 375 residues: Fluoride export protein 1 (375 aa).

The Cytoplasmic segment spans residues 1–11; sequence MIFNPVISNHK. A helical membrane pass occupies residues 12 to 32; sequence LSHYIHVFCTFTTFCILGTET. Residues 33–34 lie on the Extracellular side of the membrane; it reads RQ. Residues 35–55 traverse the membrane as a helical segment; it reads AITALSTYTPAFVTAPTVLWS. Topologically, residues 56–79 are cytoplasmic; sequence NCSSCMLMGIMQSLNAYTWMKDHQ. Residues 80-100 form a helical membrane-spanning segment; that stretch reads VLFLGVTTGYCGALSSFSSML. The Extracellular segment spans residues 101-127; sequence LEMFEHSTNLTNGNIANHTKLPNRAYG. N-linked (GlcNAc...) asparagine glycans are attached at residues Asn-109 and Asn-117. The helical transmembrane segment at 128-148 threads the bilayer; that stretch reads IMEFLSVLLVHLMVSMGSLIF. Topologically, residues 149–213 are cytoplasmic; it reads GRQLGKEVIV…FKKFFDIVDK (65 aa). A helical transmembrane segment spans residues 214–234; that stretch reads LAYALAFPLIILFVVLCAYYE. An N-linked (GlcNAc...) asparagine glycan is attached at Asn-235. At 235–241 the chain is on the extracellular side; the sequence is NYSRGKW. The chain crosses the membrane as a helical span at residues 242 to 262; it reads TLPCLFGIFAGFLRYWLAEMF. Residues 263–268 lie on the Cytoplasmic side of the membrane; that stretch reads NKTNKK. Residues 269 to 289 form a helical membrane-spanning segment; the sequence is FPLGTFLANVFATLLIGIFTM. Over 290-310 the chain is Extracellular; it reads VQRGKKHFSTDVPIVNSLNSC. A helical transmembrane segment spans residues 311–331; that stretch reads HIVSALISGFCGTLSTISTFI. The Cytoplasmic portion of the chain corresponds to 332–338; sequence NEGYKLS. A helical membrane pass occupies residues 339–359; it reads FINMLIYYTVSIAISYCLLVI. The Extracellular portion of the chain corresponds to 360-375; that stretch reads TLGSYAWTRGLTNPIC.

This sequence belongs to the fluoride channel Fluc/FEX (TC 1.A.43) family.

The protein localises to the cell membrane. The catalysed reaction is fluoride(in) = fluoride(out). Functionally, fluoride channel required for the rapid expulsion of cytoplasmic fluoride. The chain is Fluoride export protein 1 from Saccharomyces cerevisiae (strain ATCC 204508 / S288c) (Baker's yeast).